An 863-amino-acid chain; its full sequence is DNA replication licensing factor mcm4 (863 aa).

The disordered stretch occupies residues 1 to 121; that stretch reads MSSPTSTPSR…ARQRPDLGSA (121 aa). Polar residues-rich tracts occupy residues 54 to 64 and 78 to 99; these read SPSGDLQSPSG and SALQ…SSRV. The C4-type zinc finger occupies 306–331; sequence CQVCAFTTRVEIDRGRISEPSVCKHC. The MCM domain maps to 458 to 667; that stretch reads IYERLASALA…YDRRLAHHLV (210 aa). Positions 471, 497, 516, 517, 618, 643, 732, and 735 each coordinate ATP. The short motif at 642–645 is the Arginine finger element; that stretch reads SRFD.

Belongs to the MCM family. In terms of assembly, component of the mcm2-7 complex (RLF-M). The complex forms a toroidal hexameric ring with the proposed subunit order mcm2-mcm6-mcm4-mcm7-mcm3-mcm5. The heterodimer of mmcm3/mcm5 interacts with mcm4, mmcm6, mcm7 and weakly with mcm2. Component of the CMG helicase complex, composed of the mcm2-7 complex, the GINS complex and cdc45. In terms of processing, hyperphosphorylated during mitosis in a mechanism requiring cdc2-cyclin B and other kinases. Undergoes dephosphorylation after exiting mitosis, existing in a partially phosphorylated state in the cytosolic interphase mcm complex which associates with the pre-replication complexes (pre-Rcs). Complete dephosphorylation inactivates the mcm complex, preventing its binding to chromatin. Becomes actively phosphorylated during S phase once the mcm complex is assembled on the chromatin. This chromatin-associated phosphorylation occurs during the activation of the pre-Rcs and is independent of cdks. Phosphorylated by the cdc7-dbf4b complex.

It is found in the nucleus. It localises to the chromosome. The catalysed reaction is ATP + H2O = ADP + phosphate + H(+). Its function is as follows. Acts as a component of the MCM2-7 complex (MCM complex) which is the replicative helicase essential for 'once per cell cycle' DNA replication initiation and elongation in eukaryotic cells. Core component of CDC45-MCM-GINS (CMG) helicase, the molecular machine that unwinds template DNA during replication, and around which the replisome is built. The active ATPase sites in the MCM2-7 ring are formed through the interaction surfaces of two neighboring subunits such that a critical structure of a conserved arginine finger motif is provided in trans relative to the ATP-binding site of the Walker A box of the adjacent subunit. The six ATPase active sites, however, are likely to contribute differentially to the complex helicase activity. The sequence is that of DNA replication licensing factor mcm4 from Xenopus tropicalis (Western clawed frog).